The primary structure comprises 315 residues: Intradiol ring-cleavage dioxygenase prcA (315 aa).

Positions 166, 200, 224, and 226 each coordinate Fe cation. A disordered region spans residues 287–315 (KKHHPNPNSAPPVSSFERFNKASKTQEKL). Positions 304–315 (RFNKASKTQEKL) are enriched in basic and acidic residues.

It belongs to the intradiol ring-cleavage dioxygenase family. As to quaternary structure, homodimer. Requires Fe(3+) as cofactor.

It catalyses the reaction 3,4-dihydroxybenzoate + O2 = 3-carboxy-cis,cis-muconate + 2 H(+). Its function is as follows. Intradiol ring-cleavage dioxygenase; part of the benzoic acid degradation pathway also known as the protocatechuic acid pathway. Benzoic acid debradation begins with the conversion of benzoic acid into 4-hydroxybenzoic acid through hydroxylation by the benzoate-4-monooxygenase bphA, and its partner NADPH-cytochrome P450 reductase cprA which act as a mediator in electron donation from NADPH. 4-Hydroxybenzoic acid is then converted into 3,4-dihydroxybenzoic acid (also called protocatechuic acid) by the p-hydroxybenzoate-m-hydroxylase phhA. Protocatechuic acid is converted into 3-carboxy-cis,cis-muconic acid by the intradiol ring-cleavage dioxygenase prcA, which is further metabolized through the 3-oxoadipate pathway to finally enter the tricarboxylic acid cycle (TCA). The chain is Intradiol ring-cleavage dioxygenase prcA from Aspergillus niger (strain ATCC MYA-4892 / CBS 513.88 / FGSC A1513).